Here is a 201-residue protein sequence, read N- to C-terminus: Orotate phosphoribosyltransferase (201 aa).

113-121 (EDIITTGKS) contributes to the 5-phospho-alpha-D-ribose 1-diphosphate binding site. Orotate contacts are provided by threonine 117 and arginine 145.

It belongs to the purine/pyrimidine phosphoribosyltransferase family. PyrE subfamily. In terms of assembly, homodimer. Mg(2+) serves as cofactor.

It catalyses the reaction orotidine 5'-phosphate + diphosphate = orotate + 5-phospho-alpha-D-ribose 1-diphosphate. It functions in the pathway pyrimidine metabolism; UMP biosynthesis via de novo pathway; UMP from orotate: step 1/2. Functionally, catalyzes the transfer of a ribosyl phosphate group from 5-phosphoribose 1-diphosphate to orotate, leading to the formation of orotidine monophosphate (OMP). This Helicobacter pylori (strain P12) protein is Orotate phosphoribosyltransferase.